The sequence spans 480 residues: Ribosomal protein uS12 methylthiotransferase RimO (480 aa).

Residues 37–147 (NRIGFVSLGC…VLKHVHKYVP (111 aa)) enclose the MTTase N-terminal domain. [4Fe-4S] cluster contacts are provided by Cys46, Cys82, Cys111, Cys179, Cys183, and Cys186. The 238-residue stretch at 165–402 (LTPKHYAYLK…MEVQAEISAE (238 aa)) folds into the Radical SAM core domain. Positions 405–471 (ARFVGRTMDI…EHDLWAELVD (67 aa)) constitute a TRAM domain.

It belongs to the methylthiotransferase family. RimO subfamily. [4Fe-4S] cluster serves as cofactor.

The protein resides in the cytoplasm. The enzyme catalyses L-aspartate(89)-[ribosomal protein uS12]-hydrogen + (sulfur carrier)-SH + AH2 + 2 S-adenosyl-L-methionine = 3-methylsulfanyl-L-aspartate(89)-[ribosomal protein uS12]-hydrogen + (sulfur carrier)-H + 5'-deoxyadenosine + L-methionine + A + S-adenosyl-L-homocysteine + 2 H(+). Its function is as follows. Catalyzes the methylthiolation of an aspartic acid residue of ribosomal protein uS12. This is Ribosomal protein uS12 methylthiotransferase RimO from Shewanella sp. (strain ANA-3).